A 247-amino-acid chain; its full sequence is OCIA domain-containing protein 1 (247 aa).

Positions 1–112 (MNGRADFREP…KKLENSPLGE (112 aa)) constitute an OCIA domain. Phosphoserine is present on residues S108 and S116. The segment at 116-247 (SGELRRSLPP…VNKYGDTWDE (132 aa)) is disordered. Polar residues-rich tracts occupy residues 136–146 (SNVSGQSSFGT) and 168–177 (ASMNESTPTG). 2 stretches are compositionally biased toward basic and acidic residues: residues 192 to 210 (DSPKRKSVTYEELRNKNRE) and 218 to 240 (HKTDPSVRPMQERGPQKEVKVNK). Phosphoserine occurs at positions 193 and 198.

The protein belongs to the OCIAD1 family. As to quaternary structure, interacts with OCIAD2. Interacts with STAT3.

Its subcellular location is the endosome. In terms of biological role, maintains stem cell potency. Increases STAT3 phosphorylation and controls ERK phosphorylation. May act as a scaffold, increasing STAT3 recruitment onto endosomes. This Rattus norvegicus (Rat) protein is OCIA domain-containing protein 1.